A 486-amino-acid polypeptide reads, in one-letter code: Dipeptide and tripeptide permease B (486 aa).

At 1-27 (MNKPVSIGLLQQPKPFFMIFFVELWER) the chain is on the cytoplasmic side. A helical transmembrane segment spans residues 28 to 48 (FGYYGVQGVLTVYFVQKLGFS). Residues 49 to 52 (QEQA) are Periplasmic-facing. The chain crosses the membrane as a helical span at residues 53 to 73 (FITFGAFAALVFGLISIGGYV). Over 74-82 (GDHLLGTKR) the chain is Cytoplasmic. A helical transmembrane segment spans residues 83 to 103 (TIVLGAIVLAIGYFMTGLSIL). At 104 to 106 (HPN) the chain is on the periplasmic side. The helical transmembrane segment at 107–127 (LIFYALGTIAVGNGLFKANPA) threads the bilayer. Topologically, residues 128–146 (SLLSKCYPPKDPRLDGAFT) are cytoplasmic. Residues 147–167 (LFYMSINLGSLFSLALAPVIA) traverse the membrane as a helical segment. The Periplasmic segment spans residues 168-172 (EKFSY). The chain crosses the membrane as a helical span at residues 173–193 (AVTYNICGIGLIIALLVYIFC). Topologically, residues 194–211 (RNTVRNIGSEPDHQRINY) are cytoplasmic. A helical transmembrane segment spans residues 212–232 (TNLFLVVAGSVVMVYVCAWLM). Position 233 (histidine 233) is a topological domain, periplasmic. The helical transmembrane segment at 234–254 (NVKIANIMLITLSVIVVFIFF) threads the bilayer. Residues 255 to 267 (REALKQDKIGRNK) lie on the Cytoplasmic side of the membrane. Residues 268 to 288 (MFVAFILMLQAIVFFILYAQM) form a helical membrane-spanning segment. Residues 289–311 (PTSLNFFAIHNVHHQLLGFNINP) are Periplasmic-facing. The helical transmembrane segment at 312-332 (VSFQALNPFWIVVASPILAVL) threads the bilayer. At 333–348 (YTHWGAKGKDLTMPAK) the chain is on the cytoplasmic side. A helical membrane pass occupies residues 349–369 (FAVGMFLCSLGFLTAAAAGLW). At 370 to 375 (FADEQG) the chain is on the periplasmic side. The chain crosses the membrane as a helical span at residues 376 to 396 (LTSAWFIVLVYLFQGVGELMI). Topologically, residues 397–419 (SALGLAMIAALVPQYLMGFILGM) are cytoplasmic. Residues 420–440 (WYLTQATSSLLGGYVAALTAA) form a helical membrane-spanning segment. Over 441-456 (PKGITDPLQTLPVYTS) the chain is Periplasmic. Residues 457–477 (VFGKIGIATFIVAIIMAATVP) form a helical membrane-spanning segment. Residues 478–486 (LLNRMMQEK) are Cytoplasmic-facing.

The protein belongs to the major facilitator superfamily. Proton-dependent oligopeptide transporter (POT/PTR) (TC 2.A.17) family. DtpB subfamily.

It is found in the cell inner membrane. Proton-dependent permease that transports di- and tripeptides. In Photorhabdus luminescens (Xenorhabdus luminescens), this protein is Dipeptide and tripeptide permease B.